The chain runs to 282 residues: ATP synthase subunit a (282 aa).

6 helical membrane passes run 38-58 (VDSM…LWLA), 97-117 (FVAP…AMDM), 145-165 (VVPT…LLLC), 187-207 (FGSH…EFVA), 225-247 (LIFI…GHIV), and 261-281 (TLQA…AHEG).

This sequence belongs to the ATPase A chain family. In terms of assembly, F-type ATPases have 2 components, CF(1) - the catalytic core - and CF(0) - the membrane proton channel. CF(1) has five subunits: alpha(3), beta(3), gamma(1), delta(1), epsilon(1). CF(0) has three main subunits: a(1), b(2) and c(9-12). The alpha and beta chains form an alternating ring which encloses part of the gamma chain. CF(1) is attached to CF(0) by a central stalk formed by the gamma and epsilon chains, while a peripheral stalk is formed by the delta and b chains.

It is found in the cell inner membrane. Functionally, key component of the proton channel; it plays a direct role in the translocation of protons across the membrane. The chain is ATP synthase subunit a from Azoarcus sp. (strain BH72).